The sequence spans 111 residues: Large ribosomal subunit protein uL23 (111 aa).

Belongs to the universal ribosomal protein uL23 family. As to quaternary structure, part of the 50S ribosomal subunit. Contacts protein L29, and trigger factor when it is bound to the ribosome.

One of the early assembly proteins it binds 23S rRNA. One of the proteins that surrounds the polypeptide exit tunnel on the outside of the ribosome. Forms the main docking site for trigger factor binding to the ribosome. The polypeptide is Large ribosomal subunit protein uL23 (Chlamydia trachomatis serovar A (strain ATCC VR-571B / DSM 19440 / HAR-13)).